A 190-amino-acid chain; its full sequence is MLNVVIFGAPGSGKGTQSELIIKEYGLDHISTGDVLRGEMKAETELGKIAKDYIEKGQLVPDELIVDMLANVLDSKKPAKGVIFDGFPRTIPQAKALKKMLNERGTDVSVMLNLQVEEEELIKRLLERGKVSGRSDDNLETIKSRLDVYHTQTAPLADYYVGEGKHVAIKGMGTIEEIFGRIKEAVNNVK.

11-16 (GSGKGT) is an ATP binding site. The interval 31–60 (STGDVLRGEMKAETELGKIAKDYIEKGQLV) is NMP. AMP is bound by residues threonine 32, arginine 37, 58 to 60 (QLV), 86 to 89 (GFPR), and glutamine 93. The segment at 127-137 (ERGKVSGRSDD) is LID. Arginine 128 serves as a coordination point for ATP. AMP is bound by residues arginine 134 and arginine 145. Residue glycine 173 participates in ATP binding.

The protein belongs to the adenylate kinase family. Monomer.

Its subcellular location is the cytoplasm. It carries out the reaction AMP + ATP = 2 ADP. It participates in purine metabolism; AMP biosynthesis via salvage pathway; AMP from ADP: step 1/1. Catalyzes the reversible transfer of the terminal phosphate group between ATP and AMP. Plays an important role in cellular energy homeostasis and in adenine nucleotide metabolism. This Parabacteroides distasonis (strain ATCC 8503 / DSM 20701 / CIP 104284 / JCM 5825 / NCTC 11152) protein is Adenylate kinase.